A 677-amino-acid polypeptide reads, in one-letter code: WD repeat-containing protein 48 (677 aa).

Tyrosine 28 bears the Phosphotyrosine mark. WD repeat units follow at residues 28–67 (YNRN…QDPY), 73–112 (HHTD…CMST), 115–154 (THKD…ALTA), 166–205 (GNKD…KLMK), 208–247 (GHTD…CIAT), 250–289 (VHDE…IRVL), 292–334 (EEKA…NFRA), and 358–397 (KGGA…KVED). Lysine 214 carries the post-translational modification N6-acetyllysine. An N6-acetyllysine modification is found at lysine 578. The interval 607–628 (LDNESQTTSSSNNEKPGEQEKE) is disordered. The segment covering 609 to 620 (NESQTTSSSNNE) has biased composition (low complexity). The residue at position 613 (threonine 613) is a Phosphothreonine.

This sequence belongs to the WD repeat WDR48 family. Interacts with USP46. Interacts with USP1. Interacts with USP12. Component of the USP12-WDR20-WDR48 deubiquitinating complex. Component of the USP12-DMWD-WDR48 deubiquitinating complex. Interacts with PHLPP1. Interacts with RAD51AP1; the interaction is direct and promotes formation of a trimeric complex with RAD51 via RAD51AP1. Interacts with ATAD5; the interaction regulates USP1-mediated PCNA deubiquitination. Interacts with RAD51; the interaction is enhanced under replication stress. Interacts with ITCH; the interaction is more efficient when both USP12 and WDR48/UAF1 are involved and may facilitate recruitment of the USP12 deubiquitinating complex to Notch. As to quaternary structure, (Microbial infection) Interacts with papillomavirus HPV11 E1 protein. In terms of assembly, (Microbial infection) Interacts with Saimiriine herpesvirus TIP protein. (Microbial infection) Interacts with human cytomegalovirus protein UL138. As to quaternary structure, (Microbial infection) Interacts with Epstein-Barr virus protein EBNA3. Ubiquitous.

It is found in the nucleus. The protein localises to the cytoplasm. Its subcellular location is the lysosome. It localises to the late endosome. Functionally, regulator of deubiquitinating complexes, which acts as a strong activator of USP1, USP12 and USP46. Enhances the USP1-mediated deubiquitination of FANCD2; USP1 being almost inactive by itself. Activates deubiquitination by increasing the catalytic turnover without increasing the affinity of deubiquitinating enzymes for the substrate. Also activates deubiquitinating activity of complexes containing USP12. In complex with USP12, acts as a potential tumor suppressor by positively regulating PHLPP1 stability. Docks at the distal end of the USP12 fingers domain and induces a cascade of structural changes leading to the activation of the enzyme. Together with RAD51AP1, promotes DNA repair by stimulating RAD51-mediated homologous recombination. Binds single-stranded DNA (ssDNA) and double-stranded DNA (dsDNA). DNA-binding is required both for USP1-mediated deubiquitination of FANCD2 and stimulation of RAD51-mediated homologous recombination: both WDR48/UAF1 and RAD51AP1 have coordinated role in DNA-binding during these processes. Together with ATAD5 and by regulating USP1 activity, has a role in PCNA-mediated translesion synthesis (TLS) by deubiquitinating monoubiquitinated PCNA. Together with ATAD5, has a role in recruiting RAD51 to stalled forks during replication stress. (Microbial infection) In case of infection by Herpesvirus saimiri, may play a role in vesicular transport or membrane fusion events necessary for transport to lysosomes. Induces lysosomal vesicle formation via interaction with Herpesvirus saimiri tyrosine kinase-interacting protein (TIP). Subsequently, TIP recruits tyrosine-protein kinase LCK, resulting in down-regulation of T-cell antigen receptor TCR. May play a role in generation of enlarged endosomal vesicles via interaction with TIP. In case of infection by papillomavirus HPV11, promotes the maintenance of the viral genome via its interaction with HPV11 helicase E1. This chain is WD repeat-containing protein 48, found in Homo sapiens (Human).